The following is an 858-amino-acid chain: Elongation factor 2b (858 aa).

One can recognise a tr-type G domain in the interval 17–362 (SNIRNMSVIA…MITIHLPSPV (346 aa)). Residues 26–33 (AHVDHGKS), 158–161 (NKMD), and 216–218 (SGL) each bind GTP. His-715 is modified (diphthamide).

The protein belongs to the TRAFAC class translation factor GTPase superfamily. Classic translation factor GTPase family. EF-G/EF-2 subfamily. In terms of assembly, binds to 80S ribosomes. Actively translating ribosomes show mutually exclusive binding of eIF5a (EIF5A or EIF5A2) and EEF2/eEF2. Interacts with serbp1; interaction sequesters eef2/eEF2 at the A-site of the ribosome, thereby blocking the interaction sites of the mRNA-tRNA complex, promoting ribosome stabilization and hibernation. Interacts with habp4; interaction takes place at the A-site of hibernating ribosomes and promotes ribosome stabilization.

Its subcellular location is the cytoplasm. It localises to the nucleus. It catalyses the reaction GTP + H2O = GDP + phosphate + H(+). Its function is as follows. Catalyzes the GTP-dependent ribosomal translocation step during translation elongation. During this step, the ribosome changes from the pre-translocational (PRE) to the post-translocational (POST) state as the newly formed A-site-bound peptidyl-tRNA and P-site-bound deacylated tRNA move to the P and E sites, respectively. Catalyzes the coordinated movement of the two tRNA molecules, the mRNA and conformational changes in the ribosome. The protein is Elongation factor 2b of Danio rerio (Zebrafish).